The primary structure comprises 398 residues: Basic helix-loop-helix neural transcription factor TAP (398 aa).

Disordered stretches follow at residues 35-59 (ETEA…IPQP) and 102-144 (RATN…RSRS). Residues 127-141 (RPKRKYAVGKNRVTR) are compositionally biased toward basic residues. Residues 154–206 (FRRMKANDRERNRMHNLNDALEKLRVTLPSLPEETKLTKIEILRFAHNYIFAL) enclose the bHLH domain. Disordered stretches follow at residues 265-333 (AQHQ…QQFS) and 361-398 (QQSS…APQV). Residues 307 to 333 (HQQQQQPHQPHHLQPNPQQESSPQQFS) show a composition bias toward low complexity. The segment covering 361 to 370 (QQSSFYSQTP) has biased composition (polar residues).

As to expression, expressed in neuronal and glial precursors during differentiation. In the peripheral nervous system, expression is exclusively in one of the neurons that innervate each larval chemosensory organ. Expressed at a late stage in the development of one type of adult chemosensory organ, the gustatory bristles of the leg, wing and proboscis. Expressed very early in the development of a second type of chemosensory receptors, the olfactory organs of the antenna.

The protein resides in the nucleus. May play a role in the specification of the sugar-sensitive adult gustatory neuron and affect the response to sugar and salt. Regulated by POXN. This chain is Basic helix-loop-helix neural transcription factor TAP (tap), found in Drosophila melanogaster (Fruit fly).